A 102-amino-acid chain; its full sequence is Ribosomal silencing factor RsfS (102 aa).

Belongs to the Iojap/RsfS family. Interacts with ribosomal protein uL14 (rplN).

Its subcellular location is the cytoplasm. Functions as a ribosomal silencing factor. Interacts with ribosomal protein uL14 (rplN), blocking formation of intersubunit bridge B8. Prevents association of the 30S and 50S ribosomal subunits and the formation of functional ribosomes, thus repressing translation. This Haemophilus influenzae (strain ATCC 51907 / DSM 11121 / KW20 / Rd) protein is Ribosomal silencing factor RsfS.